A 394-amino-acid polypeptide reads, in one-letter code: Protein TsgA homolog (394 aa).

Transmembrane regions (helical) follow at residues 11–31 (WISYFSYALTGALVIVTGMVM), 51–71 (FLNAGILISIFLNAWLMEIIP), 76–96 (LVFGFILMLIAIAGLMVGHNL), 101–121 (ISMFILGVVSGITMSIGTFLI), 134–154 (LLFTDSFFSMAGMIFPVAAAI), 162–182 (WYWVYACIGLLYVGIFVLTLC), 206–226 (MGVLFLAIAALCYILGQLGFI), 246–266 (QLVSNFWISYMIGMWVFSFIL), 274–294 (IVTVLAALATLSMYMFVSTNN), 302–322 (ILALGFVSSAIYTTLITLGSL), 334–354 (FILTCGTVGTMLTFVVTGPIV), and 363–383 (LATANGLYLTVFVMCLILGFF).

Belongs to the major facilitator superfamily. TsgA family.

The protein localises to the cell inner membrane. In Yersinia enterocolitica serotype O:8 / biotype 1B (strain NCTC 13174 / 8081), this protein is Protein TsgA homolog.